We begin with the raw amino-acid sequence, 238 residues long: Monocyte to macrophage differentiation factor (238 aa).

At 1–28 (MQFRNRFQRFMNHRAPANGRYKPTCYEH) the chain is on the cytoplasmic side. Residues 29-49 (AANCYTHAFLIVPAIVGSALL) traverse the membrane as a helical segment. Topologically, residues 50 to 61 (HRLSDDCWEKIT) are lumenal. The chain crosses the membrane as a helical span at residues 62–82 (AWIYGMGLCALFIVSTVFHIV). The Cytoplasmic segment spans residues 83–101 (SWKKSHLRTVEHCFHMCDR). The helical transmembrane segment at 102–122 (MVIYFFIAASYAPWLNLRELG) threads the bilayer. Position 123 (proline 123) is a topological domain, lumenal. The chain crosses the membrane as a helical span at residues 124–144 (LASHMRWFIWLMAAGGTIYVF). The Cytoplasmic portion of the chain corresponds to 145-151 (LYHEKYK). A helical transmembrane segment spans residues 152–172 (VVELFFYLTMGFSPALVVTSM). Over 173–174 (NN) the chain is Lumenal. The helical transmembrane segment at 175-195 (TDGLQELACGGLIYCLGVVFF) threads the bilayer. Over 196–198 (KSD) the chain is Cytoplasmic. The helical transmembrane segment at 199–219 (GIIPFAHAIWHLFVATAAAVH) threads the bilayer. At 220 to 238 (YYAIWKYLYRSPTDFIRHL) the chain is on the lumenal side.

The protein belongs to the ADIPOR family. Preferentially expressed in the brain.

The protein resides in the late endosome membrane. It is found in the lysosome membrane. Functionally, is involved in the dynamics of lysosomal membranes associated with microglial activation following brain lesion. The chain is Monocyte to macrophage differentiation factor from Rattus norvegicus (Rat).